The primary structure comprises 673 residues: Poly(glycerol-phosphate) alpha-glucosyltransferase (673 aa).

Ser-2 is modified (phosphoserine).

The protein belongs to the glycosyltransferase group 1 family. Glycosyltransferase 4 subfamily.

It is found in the cytoplasm. It catalyses the reaction 4-O-{[(2R)-1-glycerylphospho](n)-(2R)-1-glycerylphospho}-N-acetyl-beta-D-mannosaminyl-(1-&gt;4)-N-acetyl-alpha-D-glucosaminyl undecaprenyl diphosphate + n UDP-alpha-D-glucose = 4-O-{[(2R)-2-alpha-D-glucosyl-1-glycerylphospho](n)-(2R)-1-glycerylphospho}-N-acetyl-beta-D-mannosaminyl-(1-&gt;4)-N-acetyl-alpha-D-glucosaminyl undecaprenyl diphosphate + n UDP + n H(+). Its pathway is cell wall biogenesis; poly(glycerol phosphate) teichoic acid biosynthesis. In terms of biological role, catalyzes the addition of glucose to the C-2 hydroxy group of the glycerol units in teichoic acid. The polypeptide is Poly(glycerol-phosphate) alpha-glucosyltransferase (tagE) (Bacillus subtilis (strain 168)).